We begin with the raw amino-acid sequence, 246 residues long: Ribonuclease PH (246 aa).

Phosphate contacts are provided by residues Arg-91 and 129–131 (GTR).

It belongs to the RNase PH family. Homohexameric ring arranged as a trimer of dimers.

It carries out the reaction tRNA(n+1) + phosphate = tRNA(n) + a ribonucleoside 5'-diphosphate. In terms of biological role, phosphorolytic 3'-5' exoribonuclease that plays an important role in tRNA 3'-end maturation. Removes nucleotide residues following the 3'-CCA terminus of tRNAs; can also add nucleotides to the ends of RNA molecules by using nucleoside diphosphates as substrates, but this may not be physiologically important. Probably plays a role in initiation of 16S rRNA degradation (leading to ribosome degradation) during starvation. The sequence is that of Ribonuclease PH from Paraburkholderia phytofirmans (strain DSM 17436 / LMG 22146 / PsJN) (Burkholderia phytofirmans).